Reading from the N-terminus, the 322-residue chain is Mas-related G-protein coupled receptor member X1 (322 aa).

At 1-31 (MDPTISTLDTELTPINGTEETLCYKQTLSLT) the chain is on the extracellular side. N-linked (GlcNAc...) asparagine glycosylation is present at N16. Residues 32 to 52 (VLTCIVSLVGLTGNAVVLWLL) traverse the membrane as a helical segment. Topologically, residues 53–67 (GCRMRRNAFSIYILN) are cytoplasmic. Residues 68 to 88 (LAAADFLFLSGRLIYSLLSFI) traverse the membrane as a helical segment. Residues 89-96 (SIPHTISK) lie on the Extracellular side of the membrane. Residues 97 to 117 (ILYPVMMFSYFAGLSFLSAVS) traverse the membrane as a helical segment. Over 118 to 144 (TERCLSVLWPIWYRCHRPTHLSAVVCV) the chain is Cytoplasmic. The chain crosses the membrane as a helical span at residues 145–165 (LLWALSLLRSILEWMLCGFLF). The Extracellular segment spans residues 166–177 (SGADSAWCQTSD). The helical transmembrane segment at 178-198 (FITVAWLIFLCVVLCGSSLVL) threads the bilayer. Topologically, residues 199–221 (LIRILCGSRKIPLTRLYVTILLT) are cytoplasmic. The helical transmembrane segment at 222-242 (VLVFLLCGLPFGIQFFLFLWI) threads the bilayer. Residues 243–254 (HVDREVLFCHVH) are Extracellular-facing. A helical membrane pass occupies residues 255 to 275 (LVSIFLSALNSSANPIIYFFV). Residues 276–322 (GSFRQRQNRQNLKLVLQRALQDASEVDEGGGQLPEEILELSGSRLEQ) lie on the Cytoplasmic side of the membrane.

This sequence belongs to the G-protein coupled receptor 1 family. Mas subfamily. As to expression, uniquely localized in a subset of small dorsal root and trigeminal sensory neurons.

It is found in the cell membrane. In terms of biological role, orphan receptor. Probably involved in the function of nociceptive neurons. May regulate nociceptor function and/or development, including the sensation or modulation of pain. Potently activated by enkephalins including BAM22 (bovine adrenal medulla peptide 22) and BAM (8-22). BAM22 is the most potent compound and evoked a large and dose-dependent release of intracellular calcium in stably transfected cells. G(alpha)q proteins are involved in the calcium-signaling pathway. Activated by the antimalarial drug, chloroquine. May mediate chloroquine-induced itch, in a histamine-independent manner. The chain is Mas-related G-protein coupled receptor member X1 (MRGPRX1) from Homo sapiens (Human).